The sequence spans 379 residues: UDP-4-amino-4-deoxy-L-arabinose--oxoglutarate aminotransferase (379 aa).

At Lys182 the chain carries N6-(pyridoxal phosphate)lysine.

Belongs to the DegT/DnrJ/EryC1 family. ArnB subfamily. As to quaternary structure, homodimer. It depends on pyridoxal 5'-phosphate as a cofactor.

It catalyses the reaction UDP-4-amino-4-deoxy-beta-L-arabinose + 2-oxoglutarate = UDP-beta-L-threo-pentopyranos-4-ulose + L-glutamate. It participates in nucleotide-sugar biosynthesis; UDP-4-deoxy-4-formamido-beta-L-arabinose biosynthesis; UDP-4-deoxy-4-formamido-beta-L-arabinose from UDP-alpha-D-glucuronate: step 2/3. The protein operates within bacterial outer membrane biogenesis; lipopolysaccharide biosynthesis. Its function is as follows. Catalyzes the conversion of UDP-4-keto-arabinose (UDP-Ara4O) to UDP-4-amino-4-deoxy-L-arabinose (UDP-L-Ara4N). The modified arabinose is attached to lipid A and is required for resistance to polymyxin and cationic antimicrobial peptides. This Salmonella heidelberg (strain SL476) protein is UDP-4-amino-4-deoxy-L-arabinose--oxoglutarate aminotransferase.